We begin with the raw amino-acid sequence, 239 residues long: MRTANGGPRARASPSASPADPGLPEGSERTEMRMRQMCGGSETQGPAPSQQGGRGSNACCFCWCCCCTCSCLTVRNQEDQRPQRASHEIRTDIPACEESPTPTLEEVCAWAQSFDNLMVTPAGRNAFREFLRTEFSEENMLFWMACEELKREANKSTIEEKARIIYEDYISILSPKEVSLDSRVREVINRNMVDPSQHIFDDAQLQIYTLMHRDSYPRFMNSTVYKDLLTSLAEKTVEA.

The disordered stretch occupies residues 1–29 (MRTANGGPRARASPSASPADPGLPEGSER). Positions 8-19 (PRARASPSASPA) are enriched in low complexity. In terms of domain architecture, RGS spans 113–229 (SFDNLMVTPA…MNSTVYKDLL (117 aa)).

Forms a complex with G(alpha)z/i2 subunits and mu-opioid receptors; the formation of this complex results in mu-opioid receptor desensitization. Interacts with OPRM1. Fatty acylated. Heavily palmitoylated in the cysteine string motif. In terms of processing, N- and O-glycosylated in synapsomal membranes. Post-translationally, serine phosphorylated in synapsomal membranes. Sumoylated with SUMO1, SUMO2 and SUMO3. Sumoylation increases binding to the G-proteins, G(alpha)-i2 and G(z), and interaction with mu-opioid receptors.

Its subcellular location is the membrane. It is found in the nucleus. It localises to the cytoplasm. Inhibits signal transduction by increasing the GTPase activity of G protein alpha subunits thereby driving them into their inactive GDP-bound form. Binds selectively to G(z)-alpha and G(alpha)-i2 subunits, accelerates their GTPase activity and regulates their signaling activities. The G(z)-alpha activity is inhibited by the phosphorylation and palmitoylation of the G-protein. Negatively regulates mu-opioid receptor-mediated activation of the G-proteins. This chain is Regulator of G-protein signaling 20 (Rgs20), found in Mus musculus (Mouse).